The following is a 268-amino-acid chain: MFGKPEGKPKGLNWLYRDTYIGKRKGITLGFSFAMQNDIDQELISDTQGPAPGINGQGKPSPGAGSVQVRVPYMILPNPITTPEVRNHPVDMRMYGADLAIHYGPLSFILEAGQHQFKNVFLDAQKLSEDFKNNWFIIKGAYALNPKSTTVFEPYVSYYIWDPDIKEDSKGRAYGDAANFIKGNKAGKEKATLGKISVTSLGVNIWYTKAKLMSLTFEYQIINEERNEITPLPFNSALSFSRHLPLIFLRFCSQSFPNSSPYLKYCPF.

Residues 45–64 are disordered; sequence SDTQGPAPGINGQGKPSPGA.

This is an uncharacterized protein from Aquifex aeolicus (strain VF5).